Here is a 217-residue protein sequence, read N- to C-terminus: Small ribosomal subunit protein uS3 (217 aa).

The KH type-2 domain maps to 29–97 (ADYLHEDLAI…AQLNKLTGKQ (69 aa)).

Belongs to the universal ribosomal protein uS3 family. Part of the 30S ribosomal subunit. Forms a tight complex with proteins S10 and S14.

Its function is as follows. Binds the lower part of the 30S subunit head. Binds mRNA in the 70S ribosome, positioning it for translation. This is Small ribosomal subunit protein uS3 from Streptococcus mutans serotype c (strain ATCC 700610 / UA159).